Reading from the N-terminus, the 284-residue chain is 2-dehydro-3-deoxyphosphooctonate aldolase (284 aa).

It belongs to the KdsA family.

Its subcellular location is the cytoplasm. It carries out the reaction D-arabinose 5-phosphate + phosphoenolpyruvate + H2O = 3-deoxy-alpha-D-manno-2-octulosonate-8-phosphate + phosphate. The protein operates within carbohydrate biosynthesis; 3-deoxy-D-manno-octulosonate biosynthesis; 3-deoxy-D-manno-octulosonate from D-ribulose 5-phosphate: step 2/3. Its pathway is bacterial outer membrane biogenesis; lipopolysaccharide biosynthesis. The polypeptide is 2-dehydro-3-deoxyphosphooctonate aldolase (Pseudoalteromonas translucida (strain TAC 125)).